A 140-amino-acid chain; its full sequence is Nucleoside diphosphate kinase (140 aa).

ATP-binding residues include Lys11, Phe59, Arg87, Thr93, Arg104, and Asn114. Catalysis depends on His117, which acts as the Pros-phosphohistidine intermediate.

It belongs to the NDK family. As to quaternary structure, homotetramer. The cofactor is Mg(2+).

The protein resides in the cytoplasm. The catalysed reaction is a 2'-deoxyribonucleoside 5'-diphosphate + ATP = a 2'-deoxyribonucleoside 5'-triphosphate + ADP. It carries out the reaction a ribonucleoside 5'-diphosphate + ATP = a ribonucleoside 5'-triphosphate + ADP. Its function is as follows. Major role in the synthesis of nucleoside triphosphates other than ATP. The ATP gamma phosphate is transferred to the NDP beta phosphate via a ping-pong mechanism, using a phosphorylated active-site intermediate. This is Nucleoside diphosphate kinase from Dinoroseobacter shibae (strain DSM 16493 / NCIMB 14021 / DFL 12).